Reading from the N-terminus, the 375-residue chain is Alcohol dehydrogenase 1 (375 aa).

Residue Ser-1 is modified to N-acetylserine. Cys-46, His-67, Cys-97, Cys-100, Cys-103, Cys-111, and Cys-175 together coordinate Zn(2+). Residues 200–205 (GLGGVG), Asp-224, Lys-229, 293–295 (VGV), and Arg-370 each bind NAD(+).

It belongs to the zinc-containing alcohol dehydrogenase family. Class-I subfamily. In terms of assembly, homodimer. It depends on Zn(2+) as a cofactor.

It localises to the cytoplasm. It carries out the reaction a primary alcohol + NAD(+) = an aldehyde + NADH + H(+). The enzyme catalyses a secondary alcohol + NAD(+) = a ketone + NADH + H(+). The chain is Alcohol dehydrogenase 1 (ADH1) from Coturnix japonica (Japanese quail).